A 170-amino-acid chain; its full sequence is Adenine phosphoribosyltransferase (170 aa).

It belongs to the purine/pyrimidine phosphoribosyltransferase family. Homodimer.

The protein localises to the cytoplasm. It catalyses the reaction AMP + diphosphate = 5-phospho-alpha-D-ribose 1-diphosphate + adenine. Its pathway is purine metabolism; AMP biosynthesis via salvage pathway; AMP from adenine: step 1/1. Catalyzes a salvage reaction resulting in the formation of AMP, that is energically less costly than de novo synthesis. The protein is Adenine phosphoribosyltransferase of Thermosipho africanus (strain TCF52B).